A 476-amino-acid polypeptide reads, in one-letter code: Cytochrome c oxidase subunit 1 (476 aa).

The helical transmembrane segment at 19-39 threads the bilayer; that stretch reads LYYLWFSFLFGSYGFLLSVIL. Residue Glu-42 coordinates Ca(2+). A run of 8 helical transmembrane segments spans residues 61-81, 105-125, 151-171, 194-214, 240-260, 278-298, 310-330, and 345-365; these read MIFT…GLFG, ISLL…AAEF, VIIF…LNFI, LIIT…GVLM, LFWF…FGVI, MILA…HHMY, FTST…NWIC, and LLSL…VILG. Residue His-66 coordinates Fe(II)-heme a. A Cu cation-binding site is contributed by His-246. A cross-link (1'-histidyl-3'-tyrosine (His-Tyr)) is located at residues 246 to 250; the sequence is HPEVY. Tyr-250 lines the O2 pocket. Residues His-295 and His-296 each contribute to the Cu cation site. The Mg(2+) site is built by His-374 and Asp-375. The next 2 membrane-spanning stretches (helical) occupy residues 379-399 and 415-435; these read VIAH…FTTV and SIVI…FLPM. Residue His-382 participates in heme a3 binding. Position 384 (His-384) interacts with Fe(II)-heme a. Residue Pro-448 participates in Ca(2+) binding. A helical transmembrane segment spans residues 455 to 475; that stretch reads NGWNMICSIGSTMTLFGLLIF.

Belongs to the heme-copper respiratory oxidase family. Component of the cytochrome c oxidase (complex IV, CIV), a multisubunit enzyme composed of a catalytic core of 3 subunits and several supernumerary subunits. The complex exists as a monomer or a dimer and forms supercomplexes (SCs) in the inner mitochondrial membrane with ubiquinol-cytochrome c oxidoreductase (cytochrome b-c1 complex, complex III, CIII). Requires heme as cofactor. Cu cation serves as cofactor.

It localises to the mitochondrion inner membrane. It catalyses the reaction 4 Fe(II)-[cytochrome c] + O2 + 8 H(+)(in) = 4 Fe(III)-[cytochrome c] + 2 H2O + 4 H(+)(out). Its pathway is energy metabolism; oxidative phosphorylation. Its function is as follows. Component of the cytochrome c oxidase, the last enzyme in the mitochondrial electron transport chain which drives oxidative phosphorylation. The respiratory chain contains 3 multisubunit complexes succinate dehydrogenase (complex II, CII), ubiquinol-cytochrome c oxidoreductase (cytochrome b-c1 complex, complex III, CIII) and cytochrome c oxidase (complex IV, CIV), that cooperate to transfer electrons derived from NADH and succinate to molecular oxygen, creating an electrochemical gradient over the inner membrane that drives transmembrane transport and the ATP synthase. Cytochrome c oxidase is the component of the respiratory chain that catalyzes the reduction of oxygen to water. Electrons originating from reduced cytochrome c in the intermembrane space (IMS) are transferred via the dinuclear copper A center (CU(A)) of subunit 2 and heme A of subunit 1 to the active site in subunit 1, a binuclear center (BNC) formed by heme A3 and copper B (CU(B)). The BNC reduces molecular oxygen to 2 water molecules using 4 electrons from cytochrome c in the IMS and 4 protons from the mitochondrial matrix. The protein is Cytochrome c oxidase subunit 1 (MT-CO1) of Plasmodium falciparum.